Reading from the N-terminus, the 198-residue chain is Na(+)-translocating NADH-quinone reductase subunit E (198 aa).

6 helical membrane passes run 11-31 (SVFI…FLAV), 35-55 (VSTA…SVPV), 77-97 (FLNF…LEMI), 110-130 (GIFL…SFMV), 140-160 (VVYG…LAGI), and 176-196 (LGIT…FSGV).

Belongs to the NqrDE/RnfAE family. Composed of six subunits; NqrA, NqrB, NqrC, NqrD, NqrE and NqrF.

The protein localises to the cell inner membrane. It carries out the reaction a ubiquinone + n Na(+)(in) + NADH + H(+) = a ubiquinol + n Na(+)(out) + NAD(+). Functionally, NQR complex catalyzes the reduction of ubiquinone-1 to ubiquinol by two successive reactions, coupled with the transport of Na(+) ions from the cytoplasm to the periplasm. NqrA to NqrE are probably involved in the second step, the conversion of ubisemiquinone to ubiquinol. The polypeptide is Na(+)-translocating NADH-quinone reductase subunit E (Histophilus somni (strain 129Pt) (Haemophilus somnus)).